Reading from the N-terminus, the 89-residue chain is Cornifin-B (89 aa).

Positions 1–29 (MSSQQQKQPCTPPPQLQQQQVKQPCQPPP) are disordered. Tandem repeats lie at residues 3–14 (SQQQKQPCTPPP), 18–29 (QQQVKQPCQPPP), 31–38 (EPCIPKTK), 39–46 (EPCHPKVP), 47–54 (EPCHPKVP), 55–62 (EPCQPKVP), 63–70 (EPCHPKVP), and 71–78 (EPCPSIVT). The tract at residues 3-29 (SQQQKQPCTPPPQLQQQQVKQPCQPPP) is 2 X 12 AA approximate repeats. Residues 31-78 (EPCIPKTKEPCHPKVPEPCHPKVPEPCQPKVPEPCHPKVPEPCPSIVT) form a 6 X 8 AA approximate tandem repeats region.

It belongs to the cornifin (SPRR) family. Post-translationally, the N-terminus is blocked. Suprabasal layers of squamous-differentiated tissues such as epidermis, esophagus, tongue and trachea.

The protein resides in the cytoplasm. Its function is as follows. Cross-linked envelope protein of keratinocytes. It is a keratinocyte protein that first appears in the cell cytosol, but ultimately becomes cross-linked to membrane proteins by transglutaminase. All that results in the formation of an insoluble envelope beneath the plasma membrane. Can function as both amine donor and acceptor in transglutaminase-mediated cross-linkage. In Homo sapiens (Human), this protein is Cornifin-B (SPRR1B).